The primary structure comprises 650 residues: 1-deoxy-D-xylulose-5-phosphate synthase (650 aa).

Residues H87 and G128–S130 each bind thiamine diphosphate. D159 contacts Mg(2+). Residues G160–S161, N188, Y299, and E383 each bind thiamine diphosphate. Residue N188 participates in Mg(2+) binding.

The protein belongs to the transketolase family. DXPS subfamily. In terms of assembly, homodimer. Mg(2+) serves as cofactor. It depends on thiamine diphosphate as a cofactor.

It carries out the reaction D-glyceraldehyde 3-phosphate + pyruvate + H(+) = 1-deoxy-D-xylulose 5-phosphate + CO2. It participates in metabolic intermediate biosynthesis; 1-deoxy-D-xylulose 5-phosphate biosynthesis; 1-deoxy-D-xylulose 5-phosphate from D-glyceraldehyde 3-phosphate and pyruvate: step 1/1. Functionally, catalyzes the acyloin condensation reaction between C atoms 2 and 3 of pyruvate and glyceraldehyde 3-phosphate to yield 1-deoxy-D-xylulose-5-phosphate (DXP). The sequence is that of 1-deoxy-D-xylulose-5-phosphate synthase from Syntrophus aciditrophicus (strain SB).